A 118-amino-acid polypeptide reads, in one-letter code: Myotrophin (118 aa).

At cysteine 2 the chain carries N-acetylcysteine. The ANK 1 repeat unit spans residues 2–30 (CDKEFMWALKNGDLDEVKDYVAKGEDVNR). N6-acetyllysine is present on residues lysine 4, lysine 11, and lysine 24. Threonine 31 carries the post-translational modification Phosphothreonine. ANK repeat units follow at residues 34–66 (GGRK…APDK) and 67–99 (HHIT…VKGP).

It belongs to the myotrophin family. As to quaternary structure, interacts with the heterodimer formed by CAPZA1 and CAPZB. Interacts with RELA.

It is found in the cytoplasm. The protein resides in the nucleus. The protein localises to the perinuclear region. In terms of biological role, plays a role in the regulation of the growth of actin filaments. Inhibits the activity of the F-actin-capping protein complex formed by the CAPZA1 and CAPZB heterodimer. Promotes dimerization of NF-kappa-B subunits and regulates NF-kappa-B transcription factor activity. Promotes growth of cardiomyocytes, but not cardiomyocyte proliferation. Promotes cardiac muscle hypertrophy. This chain is Myotrophin (Mtpn), found in Rattus norvegicus (Rat).